Reading from the N-terminus, the 314-residue chain is Melanoma-associated antigen 2 (314 aa).

Residues 1–20 (MPLEQRSQHCKPEEGLEARG) show a composition bias toward basic and acidic residues. Residues 1–69 (MPLEQRSQHC…SPPHSPQGAS (69 aa)) are disordered. The span at 21-44 (EALGLVGAQAPATEEQQTASSSST) shows a compositional bias: low complexity. Serine 64 is modified (phosphoserine). An MAGE domain is found at 109 to 308 (ISRKMVELVH…ISYPPLHERA (200 aa)).

Interacts with TRIM28 and UBE2H. Interacts with HDAC3. Interacts with PML (isoform PML-1, isoform PML-2, isoform PML-3, isoform PML-4 and isoform PML-5). As to expression, expressed in many tumors of several types, such as melanoma, head and neck squamous cell carcinoma, lung carcinoma and breast carcinoma, but not in normal tissues except for testes.

The protein resides in the nucleus. Its subcellular location is the PML body. Reduces p53/TP53 transactivation function through recruitment of HDAC3 to p53/TP53 transcription sites. Also represses p73/TP73 activity. Proposed to enhance ubiquitin ligase activity of RING-type zinc finger-containing E3 ubiquitin-protein ligases. In vitro enhances ubiquitin ligase activity of TRIM28 and stimulates p53/TP53 ubiquitination by TRIM28 potentially in presence of Ubl-conjugating enzyme UBE2H. Proposed to act through recruitment and/or stabilization of the Ubl-conjugating enzyme (E2) at the E3:substrate complex. May play a role in embryonal development and tumor transformation or aspects of tumor progression. In vitro promotes cell viability in melanoma cell lines. Antigen recognized on a melanoma by autologous cytolytic T-lymphocytes. Negatively regulates acetylation and sumoylation of PML and represses PML-induced p53/TP53 acetylation and activation. This chain is Melanoma-associated antigen 2 (MAGEA2), found in Homo sapiens (Human).